We begin with the raw amino-acid sequence, 130 residues long: Small ribosomal subunit protein uS9 (130 aa).

The segment at 109-130 (RVKERKKPGLKKARKARQFSKR) is disordered. Residues 111 to 130 (KERKKPGLKKARKARQFSKR) show a composition bias toward basic residues.

It belongs to the universal ribosomal protein uS9 family.

This is Small ribosomal subunit protein uS9 from Mycoplasma mobile (strain ATCC 43663 / 163K / NCTC 11711) (Mesomycoplasma mobile).